A 443-amino-acid chain; its full sequence is Dihydroorotase (443 aa).

His80 and His82 together coordinate Zn(2+). Substrate contacts are provided by residues 82–84 (HFR) and Asn114. The Zn(2+) site is built by Asp170, His197, and His251. Asn297 is a substrate binding site. Zn(2+) is bound at residue Asp324. Asp324 is an active-site residue. Substrate-binding positions include His328 and 342–343 (FG).

The protein belongs to the metallo-dependent hydrolases superfamily. DHOase family. Class I DHOase subfamily. Zn(2+) serves as cofactor.

The enzyme catalyses (S)-dihydroorotate + H2O = N-carbamoyl-L-aspartate + H(+). It participates in pyrimidine metabolism; UMP biosynthesis via de novo pathway; (S)-dihydroorotate from bicarbonate: step 3/3. Catalyzes the reversible cyclization of carbamoyl aspartate to dihydroorotate. The sequence is that of Dihydroorotase from Wolbachia sp. subsp. Brugia malayi (strain TRS).